A 360-amino-acid polypeptide reads, in one-letter code: Histidinol-phosphate aminotransferase (360 aa).

Residue lysine 222 is modified to N6-(pyridoxal phosphate)lysine.

This sequence belongs to the class-II pyridoxal-phosphate-dependent aminotransferase family. Histidinol-phosphate aminotransferase subfamily. The cofactor is pyridoxal 5'-phosphate.

It catalyses the reaction L-histidinol phosphate + 2-oxoglutarate = 3-(imidazol-4-yl)-2-oxopropyl phosphate + L-glutamate. It functions in the pathway amino-acid biosynthesis; L-histidine biosynthesis; L-histidine from 5-phospho-alpha-D-ribose 1-diphosphate: step 7/9. The chain is Histidinol-phosphate aminotransferase from Haloarcula marismortui (strain ATCC 43049 / DSM 3752 / JCM 8966 / VKM B-1809) (Halobacterium marismortui).